Consider the following 630-residue polypeptide: ATP-dependent zinc metalloprotease FtsH (630 aa).

Residues methionine 1 to asparagine 7 are Cytoplasmic-facing. A helical membrane pass occupies residues isoleucine 8 to threonine 28. Topologically, residues aspartate 29 to tryptophan 111 are periplasmic. Residues tryptophan 112–isoleucine 132 traverse the membrane as a helical segment. The Cytoplasmic portion of the chain corresponds to methionine 133–lysine 630. An ATP-binding site is contributed by glycine 203 to threonine 210. Position 425 (histidine 425) interacts with Zn(2+). Glutamate 426 is a catalytic residue. Zn(2+) contacts are provided by histidine 429 and aspartate 501. A disordered region spans residues lysine 601–lysine 630. Over residues leucine 608–glutamate 619 the composition is skewed to acidic residues. Over residues asparagine 620–lysine 630 the composition is skewed to basic and acidic residues.

In the central section; belongs to the AAA ATPase family. This sequence in the C-terminal section; belongs to the peptidase M41 family. Homohexamer. Zn(2+) serves as cofactor.

Its subcellular location is the cell inner membrane. Its function is as follows. Acts as a processive, ATP-dependent zinc metallopeptidase for both cytoplasmic and membrane proteins. Plays a role in the quality control of integral membrane proteins. In Halothermothrix orenii (strain H 168 / OCM 544 / DSM 9562), this protein is ATP-dependent zinc metalloprotease FtsH.